The following is a 443-amino-acid chain: Elongation factor 1-alpha (443 aa).

A tr-type G domain is found at 5–228; the sequence is KTHINLVVIG…DTMQPPKRPY (224 aa). The interval 14 to 21 is G1; sequence GHVDSGKS. 14–21 serves as a coordination point for GTP; it reads GHVDSGKS. A G2 region spans residues 70–74; sequence GITID. The interval 91–94 is G3; sequence DAPG. Residues 91 to 95 and 153 to 156 contribute to the GTP site; these read DAPGH and NKMD. Residues 153-156 are G4; it reads NKMD. Residues 192 to 194 form a G5 region; sequence SGF.

This sequence belongs to the TRAFAC class translation factor GTPase superfamily. Classic translation factor GTPase family. EF-Tu/EF-1A subfamily.

Its subcellular location is the cytoplasm. In terms of biological role, this protein promotes the GTP-dependent binding of aminoacyl-tRNA to the A-site of ribosomes during protein biosynthesis. This chain is Elongation factor 1-alpha (MEF-1), found in Plasmodium falciparum (isolate K1 / Thailand).